The sequence spans 349 residues: Anthranilate phosphoribosyltransferase (349 aa).

5-phospho-alpha-D-ribose 1-diphosphate-binding positions include Gly84, 87 to 88 (GD), Thr92, 94 to 97 (NIST), 112 to 120 (KHGNRAASS), and Ser124. Gly84 contacts anthranilate. Residue Ser96 participates in Mg(2+) binding. Asn115 lines the anthranilate pocket. Arg170 provides a ligand contact to anthranilate. Residues Asp228 and Glu229 each contribute to the Mg(2+) site.

This sequence belongs to the anthranilate phosphoribosyltransferase family. As to quaternary structure, homodimer. The cofactor is Mg(2+).

The catalysed reaction is N-(5-phospho-beta-D-ribosyl)anthranilate + diphosphate = 5-phospho-alpha-D-ribose 1-diphosphate + anthranilate. The protein operates within amino-acid biosynthesis; L-tryptophan biosynthesis; L-tryptophan from chorismate: step 2/5. Catalyzes the transfer of the phosphoribosyl group of 5-phosphorylribose-1-pyrophosphate (PRPP) to anthranilate to yield N-(5'-phosphoribosyl)-anthranilate (PRA). The polypeptide is Anthranilate phosphoribosyltransferase (Leifsonia xyli subsp. xyli (strain CTCB07)).